The primary structure comprises 374 residues: Putative zinc finger MYND domain-containing protein R331 (374 aa).

Zn(2+)-binding residues include cysteine 328, cysteine 331, cysteine 341, cysteine 344, cysteine 350, cysteine 354, histidine 362, and cysteine 366. Residues 328 to 366 form an MYND-type zinc finger; it reads CFYCNKNIEKPVVCNKCFRIKYCSEKCQSEYNSYHSDDC.

The protein is Putative zinc finger MYND domain-containing protein R331 of Acanthamoeba polyphaga (Amoeba).